Consider the following 416-residue polypeptide: Interleukin-1 receptor type 2 (416 aa).

The first 13 residues, Met1–Ala13, serve as a signal peptide directing secretion. Topologically, residues Phe14–Glu355 are extracellular. 3 Ig-like C2-type domains span residues Pro29–Lys136, Pro146–Thr233, and Pro249–Ser357. Intrachain disulfides connect Cys42–Cys128, Cys64–Cys120, and Cys164–Cys219. N-linked (GlcNAc...) asparagine glycans are attached at residues Asn124, Asn208, Asn231, and Asn289. Cys270 and Cys338 are joined by a disulfide. The chain crosses the membrane as a helical span at residues Val356–Ile381. Residues Arg382–Lys416 are Cytoplasmic-facing. Residues Thr396–Lys416 form a disordered region. Over residues Pro399–Lys416 the composition is skewed to polar residues.

It belongs to the interleukin-1 receptor family. Associates with IL1RAP to form a non-signaling interleukin-1 receptor complex. Post-translationally, a soluble form (sIL1R2) can also be produced by proteolytic cleavage at the cell surface (shedding) involving a metalloproteinase.

Its subcellular location is the membrane. The protein localises to the cell membrane. It localises to the secreted. Its function is as follows. Non-signaling receptor for IL1A, IL1B and IL1RN. Reduces IL1B activities. Serves as a decoy receptor by competitive binding to IL1B and preventing its binding to IL1R1. Also modulates cellular response through non-signaling association with IL1RAP after binding to IL1B. IL1R2 (membrane and secreted forms) preferentially binds IL1B and poorly IL1A and IL1RN. The secreted IL1R2 recruits secreted IL1RAP with high affinity; this complex formation may be the dominant mechanism for neutralization of IL1B by secreted/soluble receptors. This chain is Interleukin-1 receptor type 2 (Il1r2), found in Rattus norvegicus (Rat).